Reading from the N-terminus, the 338-residue chain is tRNA N6-adenosine threonylcarbamoyltransferase (338 aa).

Fe cation contacts are provided by histidine 111 and histidine 115. Substrate contacts are provided by residues 134-138, aspartate 167, glycine 180, and asparagine 272; that span reads LVSGG. Aspartate 300 is a Fe cation binding site.

The protein belongs to the KAE1 / TsaD family. It depends on Fe(2+) as a cofactor.

It is found in the cytoplasm. The enzyme catalyses L-threonylcarbamoyladenylate + adenosine(37) in tRNA = N(6)-L-threonylcarbamoyladenosine(37) in tRNA + AMP + H(+). Functionally, required for the formation of a threonylcarbamoyl group on adenosine at position 37 (t(6)A37) in tRNAs that read codons beginning with adenine. Is involved in the transfer of the threonylcarbamoyl moiety of threonylcarbamoyl-AMP (TC-AMP) to the N6 group of A37, together with TsaE and TsaB. TsaD likely plays a direct catalytic role in this reaction. This chain is tRNA N6-adenosine threonylcarbamoyltransferase, found in Shewanella denitrificans (strain OS217 / ATCC BAA-1090 / DSM 15013).